The following is a 195-amino-acid chain: A-type ATP synthase subunit E (195 aa).

The protein belongs to the V-ATPase E subunit family. Has multiple subunits with at least A(3), B(3), C, D, E, F, H, I and proteolipid K(x).

The protein localises to the cell membrane. Component of the A-type ATP synthase that produces ATP from ADP in the presence of a proton gradient across the membrane. The protein is A-type ATP synthase subunit E of Staphylothermus marinus (strain ATCC 43588 / DSM 3639 / JCM 9404 / F1).